Here is an 817-residue protein sequence, read N- to C-terminus: LPS-assembly protein LptD (817 aa).

The first 45 residues, 1–45, serve as a signal peptide directing secretion; it reads MDRLPLPHALHVPTHRPFAAPLPPRRLLARLAALMLCGVPLAVLA.

This sequence belongs to the LptD family. As to quaternary structure, component of the lipopolysaccharide transport and assembly complex. Interacts with LptE and LptA.

The protein localises to the cell outer membrane. Functionally, together with LptE, is involved in the assembly of lipopolysaccharide (LPS) at the surface of the outer membrane. The chain is LPS-assembly protein LptD from Acidovorax sp. (strain JS42).